Reading from the N-terminus, the 513-residue chain is Catalase (513 aa).

Residues 1–30 (MNPSLNAFRPGRLLVAASLTASLLSLSVQA) form the signal peptide. Residues His81 and Asn153 contribute to the active site. Tyr361 contributes to the heme binding site. The span at 391-407 (DGALNAGHSTSGVNYQP) shows a compositional bias: polar residues. The segment at 391 to 413 (DGALNAGHSTSGVNYQPSRLDPR) is disordered.

The protein belongs to the catalase family. The cofactor is heme.

It is found in the periplasm. The enzyme catalyses 2 H2O2 = O2 + 2 H2O. Its function is as follows. Decomposes hydrogen peroxide into water and oxygen; serves to protect cells from the toxic effects of hydrogen peroxide. The protein is Catalase (katB) of Pseudomonas aeruginosa (strain ATCC 15692 / DSM 22644 / CIP 104116 / JCM 14847 / LMG 12228 / 1C / PRS 101 / PAO1).